The following is a 195-amino-acid chain: MAPKLGYWKIKGLVQPTRLLLEYLGEAYEERLYDRNDGDVWRNEKFKLGLDFPNLPYYIDGDVKLTQSMAILRYIADKHNMLGGCPKERAEISMLEGAILDIRYGVSRIAYNKEFETLKVDFLNQLPGMLKMFEDRLSHNTYLNGDKVTHPDFMLYDALDVNLPPIKNYLNSNRYIKWPLQGWSATFGGGDAPPK.

A GST N-terminal domain is found at 1–83 (MAPKLGYWKI…YIADKHNMLG (83 aa)). Residues 7-8 (YW), 41-45 (WRNEK), 54-55 (NL), and 67-68 (QS) contribute to the glutathione site. The region spanning 85–195 (CPKERAEISM…TFGGGDAPPK (111 aa)) is the GST C-terminal domain. Residue Tyr111 participates in substrate binding.

It belongs to the GST superfamily. Mu family. As to quaternary structure, homodimer.

It catalyses the reaction RX + glutathione = an S-substituted glutathione + a halide anion + H(+). Conjugation of reduced glutathione to a wide number of exogenous and endogenous hydrophobic electrophiles. In terms of biological role, GST isoenzymes appear to play a central role in the parasite detoxification system. Other functions are also suspected including a role in increasing the solubility of haematin in the parasite gut. The polypeptide is Glutathione S-transferase class-mu 26 kDa isozyme (Schistosoma mansoni (Blood fluke)).